A 1653-amino-acid polypeptide reads, in one-letter code: Clathrin heavy chain (1653 aa).

The segment at 1–483 (MSDLPIEFTE…FDTTLALACY (483 aa)) is globular terminal domain. WD40-like repeat stretches follow at residues 23-66 (FLDF…KNMG), 67-107 (GDSA…LDEP), 108-152 (VIFW…ANLN), 153-198 (NTQI…QAID), 199-263 (GHVA…PDAT), 264-307 (NDFP…ITAE), and 308-336 (SVFT…VEIS). The segment at 453 to 469 (EKWLKEDKLECSEELGD) is binding site for the uncoating ATPase, involved in lattice disassembly. Residues 484-527 (LRAGAHAKVISCLAELQQFEKIIPYCQKVGYQPNFLVLISSLIR) form a flexible linker region. Positions 528–1653 (SSPDRASEFA…SAMNVQPTGF (1126 aa)) are heavy chain arm. CHCR repeat units follow at residues 543–689 (NPET…QTVV), 692–834 (ATKF…DEAF), 839–978 (LQSV…QLID), 985–1130 (IPEL…IPDA), 1134–1275 (YIKA…FKLA), 1280–1426 (LNLI…SLLV), and 1429–1572 (LTSL…REGF). Lys1107 participates in a covalent cross-link: Glycyl lysine isopeptide (Lys-Gly) (interchain with G-Cter in ubiquitin). An involved in binding clathrin light chain region spans residues 1219–1528 (AARLCYSAVS…LLYRRNKKWA (310 aa)).

This sequence belongs to the clathrin heavy chain family. In terms of assembly, clathrin triskelions, composed of 3 heavy chains and 3 light chains, are the basic subunits of the clathrin coat. Interacts with the auxilin-like clathrin uncoating factor SWA2. Interacts with INP53.

The protein localises to the cytoplasmic vesicle membrane. Its subcellular location is the membrane. It is found in the coated pit. In terms of biological role, clathrin is the major protein of the polyhedral coat of coated pits and vesicles. In yeast, it is involved in the retention of proteins in an intracellular membrane compartment, presumably the trans-Golgi. This chain is Clathrin heavy chain (CHC1), found in Saccharomyces cerevisiae (strain ATCC 204508 / S288c) (Baker's yeast).